Reading from the N-terminus, the 379-residue chain is Queuine tRNA-ribosyltransferase (379 aa).

Catalysis depends on D95, which acts as the Proton acceptor. Substrate contacts are provided by residues 95 to 99 (DSGGF), D149, Q197, and G224. Positions 255 to 261 (GVGMPAE) are RNA binding. D274 (nucleophile) is an active-site residue. The Zn(2+) site is built by C312, C314, C317, and H343.

Belongs to the queuine tRNA-ribosyltransferase family. As to quaternary structure, homodimer. Within each dimer, one monomer is responsible for RNA recognition and catalysis, while the other monomer binds to the replacement base PreQ1. It depends on Zn(2+) as a cofactor.

The catalysed reaction is 7-aminomethyl-7-carbaguanine + guanosine(34) in tRNA = 7-aminomethyl-7-carbaguanosine(34) in tRNA + guanine. Its pathway is tRNA modification; tRNA-queuosine biosynthesis. In terms of biological role, catalyzes the base-exchange of a guanine (G) residue with the queuine precursor 7-aminomethyl-7-deazaguanine (PreQ1) at position 34 (anticodon wobble position) in tRNAs with GU(N) anticodons (tRNA-Asp, -Asn, -His and -Tyr). Catalysis occurs through a double-displacement mechanism. The nucleophile active site attacks the C1' of nucleotide 34 to detach the guanine base from the RNA, forming a covalent enzyme-RNA intermediate. The proton acceptor active site deprotonates the incoming PreQ1, allowing a nucleophilic attack on the C1' of the ribose to form the product. After dissociation, two additional enzymatic reactions on the tRNA convert PreQ1 to queuine (Q), resulting in the hypermodified nucleoside queuosine (7-(((4,5-cis-dihydroxy-2-cyclopenten-1-yl)amino)methyl)-7-deazaguanosine). This is Queuine tRNA-ribosyltransferase from Solibacter usitatus (strain Ellin6076).